Consider the following 65-residue polypeptide: Large ribosomal subunit protein bL35 (65 aa).

Composition is skewed to basic residues over residues 1 to 16 (MPKM…RFKK) and 31 to 45 (HRFH…RQLR). The segment at 1 to 47 (MPKMKTHRASAKRFKKTANGGLKSASAYTSHRFHGKTKKQRRQLRGT) is disordered.

This sequence belongs to the bacterial ribosomal protein bL35 family.

This Leuconostoc citreum (strain KM20) protein is Large ribosomal subunit protein bL35.